We begin with the raw amino-acid sequence, 216 residues long: Somatotropin (216 aa).

The first 25 residues, M1 to A25, serve as a signal peptide directing secretion. A Zn(2+)-binding site is contributed by H46. An intrachain disulfide couples C78 to C189. E198 contributes to the Zn(2+) binding site. C206 and C214 are joined by a disulfide.

It belongs to the somatotropin/prolactin family.

It localises to the secreted. Its function is as follows. Growth hormone plays an important role in growth control. The chain is Somatotropin (GH) from Anas platyrhynchos (Mallard).